A 1220-amino-acid chain; its full sequence is DNA-directed RNA polymerase subunit beta (1220 aa).

It belongs to the RNA polymerase beta chain family. As to quaternary structure, the RNAP catalytic core consists of 2 alpha, 1 beta, 1 beta' and 1 omega subunit. When a sigma factor is associated with the core the holoenzyme is formed, which can initiate transcription.

It catalyses the reaction RNA(n) + a ribonucleoside 5'-triphosphate = RNA(n+1) + diphosphate. DNA-dependent RNA polymerase catalyzes the transcription of DNA into RNA using the four ribonucleoside triphosphates as substrates. The sequence is that of DNA-directed RNA polymerase subunit beta from Mesomycoplasma hyopneumoniae (strain 232) (Mycoplasma hyopneumoniae).